The following is a 197-amino-acid chain: Probable calcium-binding protein CML21 (197 aa).

A disordered region spans residues Met1–His33. Residues Ser9 to Gln30 are compositionally biased toward low complexity. 3 consecutive EF-hand domains span residues Ala37–Arg72, Glu126–Pro161, and Ala164–Asn197. Ca(2+) contacts are provided by Asp50, Asp52, Asp54, Glu61, Asp139, Asp141, Asp143, Tyr145, Glu150, Asp177, Asp179, Asp181, Arg183, and Glu188.

In terms of biological role, potential calcium sensor. This chain is Probable calcium-binding protein CML21 (CML21), found in Oryza sativa subsp. japonica (Rice).